A 680-amino-acid polypeptide reads, in one-letter code: DNA-directed RNA polymerase subunit beta' (680 aa).

Zn(2+)-binding residues include C69, C71, C87, and C90. Positions 489, 491, and 493 each coordinate Mg(2+).

This sequence belongs to the RNA polymerase beta' chain family. RpoC1 subfamily. In plastids the minimal PEP RNA polymerase catalytic core is composed of four subunits: alpha, beta, beta', and beta''. When a (nuclear-encoded) sigma factor is associated with the core the holoenzyme is formed, which can initiate transcription. It depends on Mg(2+) as a cofactor. The cofactor is Zn(2+).

Its subcellular location is the plastid. The protein resides in the chloroplast. The catalysed reaction is RNA(n) + a ribonucleoside 5'-triphosphate = RNA(n+1) + diphosphate. Functionally, DNA-dependent RNA polymerase catalyzes the transcription of DNA into RNA using the four ribonucleoside triphosphates as substrates. The protein is DNA-directed RNA polymerase subunit beta' of Cucumis sativus (Cucumber).